We begin with the raw amino-acid sequence, 284 residues long: Tropomyosin Pen a 1.0102 (284 aa).

Residues 1–51 (MDAIKKKMQAMKLEKDNAMDRADTLEQQNKEANNRAEKSEEEVHNLQKRMQ) form a disordered region. Residues 1-273 (MDAIKKKMQA…KEKYKSITDE (273 aa)) are a coiled coil. Basic and acidic residues predominate over residues 12–45 (KLEKDNAMDRADTLEQQNKEANNRAEKSEEEVHN). IgE-binding regions lie at residues 43-57 (VHNLQKRMQQLENDL), 85-105 (VAALNRRIQLLEEDLERSEER), 133-153 (RSLSDEERMDALENQLKEARF), 187-202 (ESKIVELEEELRVVGN), 247-284 (QKLQKEVDRLEDELVNEKEKYKSITDELDQTFSELSGY), 249-260 (LQKEVDRLEDEL), and 266-281 (KYKSITDELDQTFSEL).

The protein belongs to the tropomyosin family. As to quaternary structure, homodimer.

Its function is as follows. Tropomyosin, in association with the troponin complex, plays a central role in the calcium dependent regulation of muscle contraction. This is Tropomyosin Pen a 1.0102 from Penaeus aztecus (Brown shrimp).